The following is a 128-amino-acid chain: Holo-[acyl-carrier-protein] synthase (128 aa).

Residues aspartate 9 and glutamate 60 each contribute to the Mg(2+) site.

It belongs to the P-Pant transferase superfamily. AcpS family. It depends on Mg(2+) as a cofactor.

The protein localises to the cytoplasm. It carries out the reaction apo-[ACP] + CoA = holo-[ACP] + adenosine 3',5'-bisphosphate + H(+). Its function is as follows. Transfers the 4'-phosphopantetheine moiety from coenzyme A to a Ser of acyl-carrier-protein. This is Holo-[acyl-carrier-protein] synthase from Buchnera aphidicola subsp. Baizongia pistaciae (strain Bp).